Reading from the N-terminus, the 125-residue chain is Calcitonin receptor-stimulating peptide 1 (125 aa).

The first 25 residues, 1–25 (MGFWKFPPFLVLSILVLYQAGMFHA), serve as a signal peptide directing secretion. Positions 26–77 (APFRSVFDGRFDPATLDEEESRLLLAAMVNDYEQMRARESEKAQKTEGSRIQ) are excised as a propeptide. A disulfide bridge connects residues C81 and C86.

It belongs to the calcitonin family.

Its subcellular location is the secreted. Functionally, stimulates cAMP production in porcine kidney cell line LLC-PK1 via the calcitonin receptor (CT) but not via the CT-like (CL) receptor. This Capra hircus (Goat) protein is Calcitonin receptor-stimulating peptide 1 (CRSP1).